Consider the following 236-residue polypeptide: Ribose-5-phosphate isomerase A 2 (236 aa).

Substrate contacts are provided by residues 31 to 34, 86 to 89, and 99 to 102; these read SGTT, DGPD, and KGGG. Glutamate 108 acts as the Proton acceptor in catalysis. Lysine 126 contacts substrate.

This sequence belongs to the ribose 5-phosphate isomerase family. As to quaternary structure, homodimer.

The catalysed reaction is aldehydo-D-ribose 5-phosphate = D-ribulose 5-phosphate. It functions in the pathway carbohydrate degradation; pentose phosphate pathway; D-ribose 5-phosphate from D-ribulose 5-phosphate (non-oxidative stage): step 1/1. In terms of biological role, catalyzes the reversible conversion of ribose-5-phosphate to ribulose 5-phosphate. The protein is Ribose-5-phosphate isomerase A 2 of Yersinia pestis.